The following is a 274-amino-acid chain: Insulin-like growth factor-binding protein-like 1 (274 aa).

The signal sequence occupies residues 1–21; sequence MPRSPGLFLLLLVLQPLPALG. The IGFBP N-terminal domain occupies 30 to 105; the sequence is RNPECGPCRP…PEGTGLCVCA (76 aa). 7 disulfide bridges follow: cysteine 34–cysteine 59, cysteine 37–cysteine 61, cysteine 42–cysteine 62, cysteine 48–cysteine 65, cysteine 73–cysteine 87, cysteine 81–cysteine 102, and cysteine 111–cysteine 147. The region spanning 91 to 149 is the Kazal-like domain; it reads AAGAAPEGTGLCVCAQRGSVCGSDGRSYPSVCALRLRARQAPRALPGHLHKARDGPCEF. The region spanning 151–255 is the Ig-like C2-type domain; it reads PVVITPPQSV…GEAQSHGTVT (105 aa). Asparagine 162 carries an N-linked (GlcNAc...) asparagine glycan. A disulfide bridge links cysteine 172 with cysteine 239.

It localises to the secreted. In terms of biological role, IGF-binding proteins prolong the half-life of IGFs and have been shown to either inhibit or stimulate the growth promoting effects of the IGFs in cell culture. They alter the interaction of IGFs with their cell surface receptors. The polypeptide is Insulin-like growth factor-binding protein-like 1 (IGFBPL1) (Bos taurus (Bovine)).